The primary structure comprises 1229 residues: Pesticidal crystal protein Cry1Bb (1229 aa).

It belongs to the delta endotoxin family.

Functionally, promotes colloidosmotic lysis by binding to the midgut epithelial cells of many lepidopteran larvae. This is Pesticidal crystal protein Cry1Bb (cry1Bb) from Bacillus thuringiensis.